The sequence spans 122 residues: S-adenosylmethionine decarboxylase proenzyme (122 aa).

The active-site Schiff-base intermediate with substrate; via pyruvic acid is serine 63. Serine 63 bears the Pyruvic acid (Ser); by autocatalysis mark. Histidine 68 acts as the Proton acceptor; for processing activity in catalysis. Cysteine 83 serves as the catalytic Proton donor; for catalytic activity.

This sequence belongs to the prokaryotic AdoMetDC family. Type 1 subfamily. Heterotetramer of two alpha and two beta chains arranged as a dimer of alpha/beta heterodimers. Requires pyruvate as cofactor. Is synthesized initially as an inactive proenzyme. Formation of the active enzyme involves a self-maturation process in which the active site pyruvoyl group is generated from an internal serine residue via an autocatalytic post-translational modification. Two non-identical subunits are generated from the proenzyme in this reaction, and the pyruvate is formed at the N-terminus of the alpha chain, which is derived from the carboxyl end of the proenzyme. The post-translation cleavage follows an unusual pathway, termed non-hydrolytic serinolysis, in which the side chain hydroxyl group of the serine supplies its oxygen atom to form the C-terminus of the beta chain, while the remainder of the serine residue undergoes an oxidative deamination to produce ammonia and the pyruvoyl group blocking the N-terminus of the alpha chain.

It catalyses the reaction S-adenosyl-L-methionine + H(+) = S-adenosyl 3-(methylsulfanyl)propylamine + CO2. Its pathway is amine and polyamine biosynthesis; S-adenosylmethioninamine biosynthesis; S-adenosylmethioninamine from S-adenosyl-L-methionine: step 1/1. Its function is as follows. Catalyzes the decarboxylation of S-adenosylmethionine to S-adenosylmethioninamine (dcAdoMet), the propylamine donor required for the synthesis of the polyamines spermine and spermidine from the diamine putrescine. The sequence is that of S-adenosylmethionine decarboxylase proenzyme from Methanococcus maripaludis (strain C7 / ATCC BAA-1331).